A 293-amino-acid polypeptide reads, in one-letter code: Ribosomal RNA small subunit methyltransferase A (293 aa).

S-adenosyl-L-methionine is bound by residues Asn36, Leu38, Gly63, Glu84, Asp111, and Asn132.

The protein belongs to the class I-like SAM-binding methyltransferase superfamily. rRNA adenine N(6)-methyltransferase family. RsmA subfamily.

The protein localises to the cytoplasm. The enzyme catalyses adenosine(1518)/adenosine(1519) in 16S rRNA + 4 S-adenosyl-L-methionine = N(6)-dimethyladenosine(1518)/N(6)-dimethyladenosine(1519) in 16S rRNA + 4 S-adenosyl-L-homocysteine + 4 H(+). In terms of biological role, specifically dimethylates two adjacent adenosines (A1518 and A1519) in the loop of a conserved hairpin near the 3'-end of 16S rRNA in the 30S particle. May play a critical role in biogenesis of 30S subunits. This Treponema denticola (strain ATCC 35405 / DSM 14222 / CIP 103919 / JCM 8153 / KCTC 15104) protein is Ribosomal RNA small subunit methyltransferase A.